The primary structure comprises 472 residues: Probable dipeptidase A (472 aa).

Cys10 is a catalytic residue.

The protein belongs to the peptidase C69 family.

The catalysed reaction is an L-aminoacyl-L-amino acid + H2O = 2 an L-alpha-amino acid. This chain is Probable dipeptidase A (pepDA), found in Streptococcus pyogenes serotype M1.